We begin with the raw amino-acid sequence, 118 residues long: Large ribosomal subunit protein uL18 (118 aa).

A disordered region spans residues 1–24 (MITKPDKNKIRQKRHRRVRGKLSG). A compositionally biased stretch (basic residues) spans 10 to 20 (IRQKRHRRVRG).

The protein belongs to the universal ribosomal protein uL18 family. In terms of assembly, part of the 50S ribosomal subunit; part of the 5S rRNA/L5/L18/L25 subcomplex. Contacts the 5S and 23S rRNAs.

Its function is as follows. This is one of the proteins that bind and probably mediate the attachment of the 5S RNA into the large ribosomal subunit, where it forms part of the central protuberance. The chain is Large ribosomal subunit protein uL18 from Streptococcus sanguinis (strain SK36).